The sequence spans 382 residues: Bifunctional enzyme IspD/IspF (382 aa).

Residues 1-226 (MTLAVLIVAA…RSTMDNIPDI (226 aa)) form a 2-C-methyl-D-erythritol 4-phosphate cytidylyltransferase region. The interval 227–382 (RLGNGYDVHR…ALATATLVRA (156 aa)) is 2-C-methyl-D-erythritol 2,4-cyclodiphosphate synthase. Residues aspartate 233 and histidine 235 each coordinate a divalent metal cation. 4-CDP-2-C-methyl-D-erythritol 2-phosphate contacts are provided by residues 233–235 (DVH) and 259–260 (HS). Histidine 267 is an a divalent metal cation binding site. 4-CDP-2-C-methyl-D-erythritol 2-phosphate contacts are provided by residues 281-283 (DIG), 357-360 (TTSE), phenylalanine 364, and arginine 367.

This sequence in the N-terminal section; belongs to the IspD/TarI cytidylyltransferase family. IspD subfamily. In the C-terminal section; belongs to the IspF family. It depends on a divalent metal cation as a cofactor.

It catalyses the reaction 2-C-methyl-D-erythritol 4-phosphate + CTP + H(+) = 4-CDP-2-C-methyl-D-erythritol + diphosphate. The catalysed reaction is 4-CDP-2-C-methyl-D-erythritol 2-phosphate = 2-C-methyl-D-erythritol 2,4-cyclic diphosphate + CMP. It functions in the pathway isoprenoid biosynthesis; isopentenyl diphosphate biosynthesis via DXP pathway; isopentenyl diphosphate from 1-deoxy-D-xylulose 5-phosphate: step 2/6. The protein operates within isoprenoid biosynthesis; isopentenyl diphosphate biosynthesis via DXP pathway; isopentenyl diphosphate from 1-deoxy-D-xylulose 5-phosphate: step 4/6. Bifunctional enzyme that catalyzes the formation of 4-diphosphocytidyl-2-C-methyl-D-erythritol from CTP and 2-C-methyl-D-erythritol 4-phosphate (MEP) (IspD), and catalyzes the conversion of 4-diphosphocytidyl-2-C-methyl-D-erythritol 2-phosphate (CDP-ME2P) to 2-C-methyl-D-erythritol 2,4-cyclodiphosphate (ME-CPP) with a corresponding release of cytidine 5-monophosphate (CMP) (IspF). The chain is Bifunctional enzyme IspD/IspF from Ruegeria sp. (strain TM1040) (Silicibacter sp.).